Consider the following 92-residue polypeptide: FMRFamide-like neuropeptides 16 (92 aa).

An N-terminal signal peptide occupies residues 1 to 24 (MNFSGFEFSSIVAFFLLILQLSTA). Positions 25–55 (AVLPADYAYGVADEMSALPDSGSLFAEQRPS) are excised as a propeptide. Phenylalanine amide occurs at positions 64, 74, and 84. The propeptide occupies 87–92 (SAPFEQ).

This sequence belongs to the FARP (FMRFamide related peptide) family. Each flp gene is expressed in a distinct set of neurons.

The protein localises to the secreted. Its function is as follows. FMRFamides and FMRFamide-like peptides are neuropeptides. AQTFVRF-amide inhibits the activity of dissected pharyngeal myogenic muscle system. The sequence is that of FMRFamide-like neuropeptides 16 from Caenorhabditis elegans.